The following is a 443-amino-acid chain: tRNA modification GTPase MnmE (443 aa).

Residues Arg-23, Glu-82, and Lys-121 each contribute to the (6S)-5-formyl-5,6,7,8-tetrahydrofolate site. In terms of domain architecture, TrmE-type G spans 215–364; the sequence is GTSIVLAGHP…LKQFIQKWMQ (150 aa). Asn-225 provides a ligand contact to K(+). GTP contacts are provided by residues 225–230, 244–250, and 269–272; these read NVGKSS, TDIPGTT, and DSAG. Ser-229 lines the Mg(2+) pocket. Thr-244, Ile-246, and Thr-249 together coordinate K(+). A Mg(2+)-binding site is contributed by Thr-250. Residue Lys-443 participates in (6S)-5-formyl-5,6,7,8-tetrahydrofolate binding.

Belongs to the TRAFAC class TrmE-Era-EngA-EngB-Septin-like GTPase superfamily. TrmE GTPase family. In terms of assembly, homodimer. Heterotetramer of two MnmE and two MnmG subunits. Requires K(+) as cofactor.

Its subcellular location is the cytoplasm. In terms of biological role, exhibits a very high intrinsic GTPase hydrolysis rate. Involved in the addition of a carboxymethylaminomethyl (cmnm) group at the wobble position (U34) of certain tRNAs, forming tRNA-cmnm(5)s(2)U34. The sequence is that of tRNA modification GTPase MnmE from Chlamydia caviae (strain ATCC VR-813 / DSM 19441 / 03DC25 / GPIC) (Chlamydophila caviae).